A 380-amino-acid polypeptide reads, in one-letter code: MKASADASSPQETTPPLSLLLFVANRPGDEEETAAIQAHIQQLPSNFSFELKVVPIGEQPYLLEEYKLVATPALIKVRPEPRQTLAGRKLLQKVDYWWPRWQREVALGLQADMQKSAAEQSDCSMELSRLKDELFQLRQERDRLAEQLQFKDRIISLLAHELRNPLTAGGIALETLESNLQEESSQQLPIEDIQRLFHHARSQTQTMGQLITDLLLAARGPQDKLQIMARQLDLRQLCQETVEDVRLNFERKKQHFTTDIPLDLPLVYGDGDRIRQVLVNLLDNACKYTPEGGKIHLSAFHRMTQKVQVTVSDTGPGIPIEQQEKIFGETVRLDRDRAIEGYGIGLALCRQIIRMHYGQIWVDSQPGKGSCFHFTLPVYS.

A kaiB-like domain, interacts with KaiC region spans residues 20 to 101 (LLFVANRPGD…QKVDYWWPRW (82 aa)). Positions 157–380 (LLAHELRNPL…CFHFTLPVYS (224 aa)) constitute a Histidine kinase domain. H160 carries the phosphohistidine; by autocatalysis modification.

Homotrimer with a small amount of possible homohexamer; a protein fragment of 109-380 is also a homotrimer. Interacts with KaiC, probably as 1 SasA trimer:1 KaiC homohexamer; unphosphorylated SasA has the highest affinity. Homodimer. Binds to the B-loop in the CI domain of KaiC; SasA and KaiB(fs) compete to bind to the CI domain. Binds preferentially to doubly phosphorylated KaiC. Autophosphorylates, probably on His-160.

It catalyses the reaction ATP + protein L-histidine = ADP + protein N-phospho-L-histidine.. Functionally, member of the two-component regulatory system SasA/RpaA involved in genome-wide circadian gene expression. One of several clock output pathways. Participates in the Kai clock protein complex, the main circadian regulator in cyanobacteria, via its interaction with KaiC. KaiC enhances the autophosphorylation activity of SasA, which then transfers its phosphate group to RpaA to activate it. In addition to its output function, recruits fold-shifted KaiB (KaiB(fs)) to KaiC to cooperatively form the KaiB(6):KaiC(6) complex (independent of SasA kinase activity). Required for robustness of the circadian rhythm of gene expression and is involved in clock output, also required for adaptation to light/dark cycles. In Thermosynechococcus vestitus (strain NIES-2133 / IAM M-273 / BP-1), this protein is Adaptive-response sensory kinase SasA.